The primary structure comprises 327 residues: Phenylalanine--tRNA ligase alpha subunit (327 aa).

A Mg(2+)-binding site is contributed by glutamate 252.

Belongs to the class-II aminoacyl-tRNA synthetase family. Phe-tRNA synthetase alpha subunit type 1 subfamily. As to quaternary structure, tetramer of two alpha and two beta subunits. Requires Mg(2+) as cofactor.

Its subcellular location is the cytoplasm. The enzyme catalyses tRNA(Phe) + L-phenylalanine + ATP = L-phenylalanyl-tRNA(Phe) + AMP + diphosphate + H(+). In Escherichia coli O127:H6 (strain E2348/69 / EPEC), this protein is Phenylalanine--tRNA ligase alpha subunit.